Here is an 860-residue protein sequence, read N- to C-terminus: MSRFFYGNDSDSDSSGSDEEELYSDEEVEQSEEESSEEDASSEEESSEDEDAGKAGASRFMKDVSDSEESEEEDVVKVVKSAKNKRLEELESTIKLIDNAQKINDWAVISSEFDKMNRQVVKVLQSGPVPKIYVKTVADLEDFVNETVAKQKSSNKKMNASNAKGFNAIKQKIKKNNKEYAAQIEKYRADKDSYMESDEEEEKKPAIAAPRLSKLERVEAPVAVAGDDDGFETVVRGKTLQYTPESILKHLRVIVESRGKKNTDRLEQIKTMEKLLEVAQTPYQRIRVYLTLISTRFDLSTTSTAAYMSVEQWKAAEQELSTLLSVLEKERNYVVSEGAEEWEDDEKQPQVAAGETFYIPGSIVSYVERLDDELTRSLQHIDPHTAEYIERLSDEKQLYTNLVRTQIYVEGLTKLEKTELRQDSLNRVVMRRLEHIYFKPSQVITILEEGTDKALPSELETSITTRGNSDAQTLVQTLCNYLFRNSDGILRARAMLAQIYFLALHDQYYRARDLMLMSHLSENIANFDVSSQILFNRTLVQIGLCAFRAGLIYEAQNTLSEICGSGRQKELLAQGIILQRYSTVSPEQERLERQRQLPFHMHINLELLECIYLTSSMFLEVPLMAQTSSSPEMKRRVISKTFRRMLDYNERQVFTGPAENTRDGVIMSAKFLAAGDWKKAAEMLNSIKIWDLMPQPEKIKEMLSQQIQEEGLRTYLFTYAPFYDSLSISTLSTMFELSEKKIAAIISRMISHEELGAALDQVNDAIVFRKGVELSRLQSQIVTLADKSMNLLEANEKTLEQRTQGMANAFQRDQGAGARGGRGPRGGGQARGGPRLPGGQQRRPGGQQFGGGALGGAIKA.

The disordered stretch occupies residues 1–76 (MSRFFYGNDS…SEESEEEDVV (76 aa)). Positions 10–51 (SDSDSSGSDEEELYSDEEVEQSEEESSEEDASSEEESSEDED) are enriched in acidic residues. The 175-residue stretch at 599 to 773 (FHMHINLELL…DAIVFRKGVE (175 aa)) folds into the PCI domain. Residues 812-860 (RDQGAGARGGRGPRGGGQARGGPRLPGGQQRRPGGQQFGGGALGGAIKA) are disordered. The segment covering 817-831 (GARGGRGPRGGGQAR) has biased composition (gly residues). The span at 832–846 (GGPRLPGGQQRRPGG) shows a compositional bias: low complexity. The segment covering 847-860 (QQFGGGALGGAIKA) has biased composition (gly residues).

This sequence belongs to the eIF-3 subunit C family. In terms of assembly, component of the eukaryotic translation initiation factor 3 (eIF-3) complex.

Its subcellular location is the cytoplasm. Component of the eukaryotic translation initiation factor 3 (eIF-3) complex, which is involved in protein synthesis of a specialized repertoire of mRNAs and, together with other initiation factors, stimulates binding of mRNA and methionyl-tRNAi to the 40S ribosome. The eIF-3 complex specifically targets and initiates translation of a subset of mRNAs involved in cell proliferation. In Emericella nidulans (strain FGSC A4 / ATCC 38163 / CBS 112.46 / NRRL 194 / M139) (Aspergillus nidulans), this protein is Eukaryotic translation initiation factor 3 subunit C (nip1).